A 652-amino-acid polypeptide reads, in one-letter code: Apicoplast pyruvate carrier 2 (652 aa).

The Cytoplasmic portion of the chain corresponds to 1–45 (MSAFPASPQPSAFPASPQPSAFPASPQPSASPVSPRHCVSPSSGT). The tract at residues 1 to 53 (MSAFPASPQPSAFPASPQPSAFPASPQPSASPVSPRHCVSPSSGTLPSSSSPS) is disordered. Helical transmembrane passes span 46 to 66 (LPSS…SSSS), 126 to 146 (NLLP…AVSY), 167 to 187 (GTTL…SAWM), 189 to 209 (LGLA…IAYG), 212 to 232 (TALG…KLSP), 278 to 298 (LPYL…SSLN), 345 to 365 (LVDP…AERQ), 385 to 405 (SCSA…ICSS), 417 to 437 (LSWQ…LYPE), 445 to 465 (AAPA…PRAL), 467 to 487 (SASR…SLTG), and 515 to 535 (LWGY…MNAL). Residues 536–652 (TAPCLFALST…LPYRFPTYSP (117 aa)) are Cytoplasmic-facing.

The protein belongs to the major facilitator superfamily. In terms of assembly, interacts with apicoplast pyruvate carrier 1.

The protein localises to the plastid. The protein resides in the apicoplast. It is found in the membrane. Functionally, along with apicoplast pyruvate carrier 1, forms apicoplast pyruvate carrier (APC) complex, which transports pyruvate into the apicoplast and may also transport amino acids like methionine, serine, glycine and tryptophan with low efficiency. Required for maintaining pyruvate-dependent metabolic activities in the apicoplast, such as synthesis of fatty acids, isopentenyl pyrophosphate (IPP), dimethylallyl pyrophosphate (DMAPP) and methylerythritol 4-phosphate (MEP). Required for maintaining the integrity of the apicoplast. Required for normal parasite growth. The sequence is that of Apicoplast pyruvate carrier 2 from Toxoplasma gondii.